We begin with the raw amino-acid sequence, 328 residues long: MADLLNVLKDKLSGKNVKIVLPEGEDERVLTAATQLQATDYVTPIVLGDETKVQSLAQKLDLDISNIELINPATSELKAELVQSFVERRKGKATEEQAQELLNNVNYFGTMLVYAGKADGLVSGAAHSTGDTVRPALQIIKTKPGVSRTSGIFFMIKGDVQYIFGDCAINPELDSQGLAEIAVESAKSALSFGMDPKVAMLSFSTKGSAKSDDVTKVQEAVKLAQQKAEEEKLEAIIDGEFQFDAAIVPGVAEKKAPGAKLQGDANVFVFPSLEAGNIGYKIAQRLGGYDAVGPVLQGLNSPVNDLSRGCSIEDVYNLSIITAAQALQ.

Belongs to the phosphate acetyltransferase and butyryltransferase family.

The protein resides in the cytoplasm. The enzyme catalyses acetyl-CoA + phosphate = acetyl phosphate + CoA. It functions in the pathway metabolic intermediate biosynthesis; acetyl-CoA biosynthesis; acetyl-CoA from acetate: step 2/2. The protein is Phosphate acetyltransferase (pta) of Staphylococcus aureus (strain MSSA476).